An 84-amino-acid chain; its full sequence is MSSGGLLLLLGLLTLWAELTPISGHDRPTFCNLAPESGRCRAHLRRIYYNLESNKCEVFFYGGCGGNDNNFSTWDECRHTCVGK.

The N-terminal stretch at Met1–Gly24 is a signal peptide. In terms of domain architecture, BPTI/Kunitz inhibitor spans Cys31–Cys81. Cystine bridges form between Cys31–Cys81, Cys40–Cys64, and Cys56–Cys77.

The protein belongs to the venom Kunitz-type family. In terms of tissue distribution, expressed by the venom gland.

Its subcellular location is the secreted. In terms of biological role, serine protease inhibitor that inhibits plasmin (90%) (Ki=0.19 nM), trypsin (70%), FXIa/F11 (37%) (Ki=6 nM) and FXa/F10 (20%), and prolonges the activated partial thromboplastin time. This antifibrinolytic property has been confirmed by a fibrin plate assay. Shows less antifibrinolytic activity that aprotinin. In vivo, reduces the bleeding time in a murine bleeding model, and prevents the increase of fibrin(ogen) degradation products in coagulation-stimulated mice. In Daboia russelii (Russel's viper), this protein is Kunitz-type serine protease inhibitor DrKIn-II.